A 776-amino-acid chain; its full sequence is ADP-ribosylation factor GTPase-activating protein AGD2 (776 aa).

Positions 2–226 (AGFINLEDSP…IHQVLTYAQQ (225 aa)) constitute a BAR domain. The disordered stretch occupies residues 248 to 267 (QSELDSQQASAKADPSDVGG). In terms of domain architecture, PH spans 290–421 (EVTKQGYLLK…WVNKITAAIT (132 aa)). The 138-residue stretch at 467–604 (DDVLTILREI…ALVVKDEREA (138 aa)) folds into the Arf-GAP domain. The C4-type zinc finger occupies 482-505 (CAECNAPDPDWASLNLGVLMCIEC). ANK repeat units lie at residues 683–712 (QGCS…DINM) and 716–745 (HGRT…RPSI).

Expressed in roots, hypocotyls, cotyledons, leaf and shoot apical meristems and siliques.

Functionally, probable GTPase-activating protein. The sequence is that of ADP-ribosylation factor GTPase-activating protein AGD2 (AGD2) from Arabidopsis thaliana (Mouse-ear cress).